The sequence spans 641 residues: EKIKICLQKQVNSSFSLHNGFGGNLYATEEKRMFELVKPKAGASVLNQSTWIGFGDSRTDKSNPNFPRSADVSVKTANKFRSLTGGSLMLSMFGPPGKVDYLYQGCGKHKVFYEGVNWSPHAAIDCYRKNWTDIKLNFQKNIYELASQSHCMSLVNALDKTIPLQATAGVAGNCNNSFLKNPALYTQKVTPPXXKCGKENLAFFTLPTQFGTYECRLHLVASCYFIYDSKEVYNKRGCDNYFQVIYDSSGKVVGGLDNRVSPYTGNSGDTPTMQCDMIQLKPGRYSVRSSPRFLLMPERSYCFDMKEKGPVTAVQSIWGKDRKSDYAVDQACLSTPGCMLIQKQKPYTGEADDHHGDQEMRELLSGLDYEARCISQSGWVNETSPFTEEYLLPPKFGRCPLAAKEESIPKIPDGLLIPTSGTDTTVTKPKSRIFGIDDLIIGLFFVAIVEAGIGGYLLGSRKESGGGVTKESAEKGFEKIGNDIQILRSSTNIAIEKLNDRISHDEQAIRDLTLEIENARSEALLGELGIIRALLVGNISIGLQESLWELASEITNRAGDLAVEISPGCWIIDNNICDQSCQNFIFKFNETAPVPTIPPLDTKIDLQSDPFYWGSSLGLAITAAISLAALVISGIAICRTK.

The segment at 1–26 (EKIKICLQKQVNSSFSLHNGFGGNLY) is fusion domain-1. Residues 1–616 (EKIKICLQKQ…QSDPFYWGSS (616 aa)) lie on the Extracellular side of the membrane. Disulfide bonds link cysteine 6–cysteine 569, cysteine 106–cysteine 151, cysteine 126–cysteine 174, cysteine 196–cysteine 238, cysteine 215–cysteine 302, cysteine 223–cysteine 275, and cysteine 332–cysteine 338. Asparagine 12 and asparagine 47 each carry an N-linked (GlcNAc...) asparagine; by host glycan. The esterase domain-1 stretch occupies residues 27 to 137 (ATEEKRMFEL…RKNWTDIKLN (111 aa)). Serine 57 functions as the Nucleophile in the catalytic mechanism. Asparagine 130 carries N-linked (GlcNAc...) asparagine; by host glycosylation. Positions 137 to 296 (NFQKNIYELA…VRSSPRFLLM (160 aa)) are N-acetyl-9-O-acetylneuraminic acid binding. Residues 297-351 (PERSYCFDMKEKGPVTAVQSIWGKDRKSDYAVDQACLSTPGCMLIQKQKPYTGEA) form an esterase domain-2 region. Residues aspartate 352 and histidine 355 each act as charge relay system in the active site. Positions 352–637 (DDHHGDQEMR…AALVISGIAI (286 aa)) are fusion domain-2. The N-linked (GlcNAc...) asparagine; by host glycan is linked to asparagine 381. The chain crosses the membrane as a helical span at residues 617-637 (LGLAITAAISLAALVISGIAI). Over 638-641 (CRTK) the chain is Cytoplasmic.

Belongs to the influenza type C/coronaviruses hemagglutinin-esterase family. In terms of assembly, homotrimer of disulfide-linked HEF1-HEF2. In terms of processing, in natural infection, inactive HEF is matured into HEF1 and HEF2 outside the cell by one or more trypsin-like, arginine-specific endoprotease.

It is found in the virion membrane. The protein resides in the host cell membrane. It catalyses the reaction N-acetyl-9-O-acetylneuraminate + H2O = N-acetylneuraminate + acetate + H(+). It carries out the reaction N-acetyl-4-O-acetylneuraminate + H2O = N-acetylneuraminate + acetate + H(+). Binds to the N-acetyl-9-O-acetylneuraminic acid residues on the cell surface, bringing about the attachment of the virus particle to the cell. Plays a major role in the determination of host range restriction and virulence. Class I viral fusion protein. Responsible for penetration of the virus into the cell cytoplasm by mediating the fusion of the membrane of the endocytosed virus particle with the endosomal membrane. Low pH in endosomes induce an irreversible conformational change in HEF2, releasing the fusion hydrophobic peptide. Several trimers are required to form a competent fusion pore. Displays a receptor-destroying activity which is a neuraminidate-O-acetyl esterase. This activity cleaves off any receptor on the cell surface, which would otherwise prevent virions release. These cleavages prevent self-aggregation and ensure the efficient spread of the progeny virus from cell to cell. The protein is Hemagglutinin-esterase-fusion glycoprotein (HE) of Homo sapiens (Human).